Reading from the N-terminus, the 236-residue chain is tRNA (guanine-N(1)-)-methyltransferase (236 aa).

Residues glycine 110 and 129 to 134 (LGDFVL) contribute to the S-adenosyl-L-methionine site.

The protein belongs to the RNA methyltransferase TrmD family. Homodimer.

The protein localises to the cytoplasm. The enzyme catalyses guanosine(37) in tRNA + S-adenosyl-L-methionine = N(1)-methylguanosine(37) in tRNA + S-adenosyl-L-homocysteine + H(+). Specifically methylates guanosine-37 in various tRNAs. The sequence is that of tRNA (guanine-N(1)-)-methyltransferase from Clostridium perfringens (strain ATCC 13124 / DSM 756 / JCM 1290 / NCIMB 6125 / NCTC 8237 / Type A).